The following is a 154-amino-acid chain: MPHSKHPSSHPHIIIYTDGACKGNPGPGGWGAVLRSGSHEKHIHGGEKLTTNNRMEICAVIFALKALKQRSSVELWTDSQYVQKGVTEWLEGWKKRGWKTASKDPVKNADLWQELDTLLPDHDISWHWVRGHNGHPGNELADALANKGVEEFLP.

The RNase H type-1 domain maps to 9–150; sequence SHPHIIIYTD…ADALANKGVE (142 aa). The Mg(2+) site is built by aspartate 18, glutamate 56, aspartate 78, and aspartate 142.

Belongs to the RNase H family. As to quaternary structure, monomer. Mg(2+) is required as a cofactor.

Its subcellular location is the cytoplasm. The catalysed reaction is Endonucleolytic cleavage to 5'-phosphomonoester.. Its function is as follows. Endonuclease that specifically degrades the RNA of RNA-DNA hybrids. This chain is Ribonuclease H, found in Polynucleobacter asymbioticus (strain DSM 18221 / CIP 109841 / QLW-P1DMWA-1) (Polynucleobacter necessarius subsp. asymbioticus).